The sequence spans 264 residues: Thymidylate synthase (264 aa).

Arginine 21 is a dUMP binding site. Histidine 51 contributes to the (6R)-5,10-methylene-5,6,7,8-tetrahydrofolate binding site. Position 126–127 (126–127) interacts with dUMP; the sequence is RR. Cysteine 146 (nucleophile) is an active-site residue. DUMP is bound by residues 166–169, asparagine 177, and 207–209; these read RSAD and HLY. Aspartate 169 contributes to the (6R)-5,10-methylene-5,6,7,8-tetrahydrofolate binding site. Alanine 263 lines the (6R)-5,10-methylene-5,6,7,8-tetrahydrofolate pocket.

Belongs to the thymidylate synthase family. Bacterial-type ThyA subfamily. Homodimer.

The protein localises to the cytoplasm. It carries out the reaction dUMP + (6R)-5,10-methylene-5,6,7,8-tetrahydrofolate = 7,8-dihydrofolate + dTMP. Its pathway is pyrimidine metabolism; dTTP biosynthesis. Catalyzes the reductive methylation of 2'-deoxyuridine-5'-monophosphate (dUMP) to 2'-deoxythymidine-5'-monophosphate (dTMP) while utilizing 5,10-methylenetetrahydrofolate (mTHF) as the methyl donor and reductant in the reaction, yielding dihydrofolate (DHF) as a by-product. This enzymatic reaction provides an intracellular de novo source of dTMP, an essential precursor for DNA biosynthesis. This Bartonella quintana (strain Toulouse) (Rochalimaea quintana) protein is Thymidylate synthase.